The sequence spans 146 residues: Hemoglobin subunit beta (146 aa).

A Globin domain is found at 2-146; the sequence is HWTAEEKQLI…VAHALARKYH (145 aa). Heme b contacts are provided by H63 and H92.

The protein belongs to the globin family. As to quaternary structure, heterotetramer of two alpha chains and two beta chains. Red blood cells.

Functionally, involved in oxygen transport from the lung to the various peripheral tissues. The protein is Hemoglobin subunit beta (HBB) of Aegypius monachus (Cinereous vulture).